The sequence spans 458 residues: V-type sodium ATPase subunit B (458 aa).

Belongs to the ATPase alpha/beta chains family.

Involved in ATP-driven sodium extrusion. This Enterococcus hirae (strain ATCC 9790 / DSM 20160 / JCM 8729 / LMG 6399 / NBRC 3181 / NCIMB 6459 / NCDO 1258 / NCTC 12367 / WDCM 00089 / R) protein is V-type sodium ATPase subunit B (ntpB).